The sequence spans 317 residues: Transaldolase (317 aa).

Lysine 132 serves as the catalytic Schiff-base intermediate with substrate.

This sequence belongs to the transaldolase family. Type 1 subfamily. Homodimer.

It is found in the cytoplasm. It catalyses the reaction D-sedoheptulose 7-phosphate + D-glyceraldehyde 3-phosphate = D-erythrose 4-phosphate + beta-D-fructose 6-phosphate. The protein operates within carbohydrate degradation; pentose phosphate pathway; D-glyceraldehyde 3-phosphate and beta-D-fructose 6-phosphate from D-ribose 5-phosphate and D-xylulose 5-phosphate (non-oxidative stage): step 2/3. Transaldolase is important for the balance of metabolites in the pentose-phosphate pathway. This is Transaldolase from Edwardsiella ictaluri (strain 93-146).